A 417-amino-acid polypeptide reads, in one-letter code: Snake venom metalloproteinase aculysin-1 (417 aa).

Residues 1–20 (MIQVLLVTICLAAFPYQGSS) form the signal peptide. Positions 21-189 (IMLESGKVND…KKPSWLNLTP (169 aa)) are excised as a propeptide. In terms of domain architecture, Peptidase M12B spans 197-392 (TSVNLQLIVD…KKPKCIHKKS (196 aa)). 3 disulfide bridges follow: Cys308–Cys387, Cys349–Cys371, and Cys351–Cys354. His333 contributes to the Zn(2+) binding site. Glu334 is a catalytic residue. Residues His337 and His343 each contribute to the Zn(2+) site. The propeptide occupies 393 to 417 (LKTDTVSTSVSGNEPLDDNVDGFHA). A disordered region spans residues 398–417 (VSTSVSGNEPLDDNVDGFHA). Over residues 407 to 417 (PLDDNVDGFHA) the composition is skewed to acidic residues.

This sequence belongs to the venom metalloproteinase (M12B) family. P-I subfamily. Monomer. It depends on Zn(2+) as a cofactor. Expressed by the venom gland.

The protein localises to the secreted. Functionally, this protein is an alkaline zinc metalloprotease from snake venom that possesses weak hemorrhagic activity. This Deinagkistrodon acutus (Hundred-pace snake) protein is Snake venom metalloproteinase aculysin-1.